The following is a 595-amino-acid chain: UvrABC system protein C (595 aa).

A GIY-YIG domain is found at 14-91 (SNPGCYLHKD…IQENMPKFNI (78 aa)). Residues 196–231 (DKIVNQLKAKMKDMSDQMAFERAAEYRDLIEAVSTL) form the UVR domain.

It belongs to the UvrC family. Interacts with UvrB in an incision complex.

It localises to the cytoplasm. The UvrABC repair system catalyzes the recognition and processing of DNA lesions. UvrC both incises the 5' and 3' sides of the lesion. The N-terminal half is responsible for the 3' incision and the C-terminal half is responsible for the 5' incision. The sequence is that of UvrABC system protein C from Streptococcus thermophilus (strain ATCC BAA-491 / LMD-9).